Here is a 199-residue protein sequence, read N- to C-terminus: Ribonuclease HII (199 aa).

Residues Met-1–Ile-199 enclose the RNase H type-2 domain. 3 residues coordinate a divalent metal cation: Asp-7, Glu-8, and Asp-97.

Belongs to the RNase HII family. Requires Mn(2+) as cofactor. It depends on Mg(2+) as a cofactor.

The protein localises to the cytoplasm. It carries out the reaction Endonucleolytic cleavage to 5'-phosphomonoester.. Its function is as follows. Endonuclease that specifically degrades the RNA of RNA-DNA hybrids. This is Ribonuclease HII from Picrophilus torridus (strain ATCC 700027 / DSM 9790 / JCM 10055 / NBRC 100828 / KAW 2/3).